Consider the following 142-residue polypeptide: MAKKVDGYIKLQVAAGAANPSPPVGPALGQKGVNIMEFCKAFNARTEKFEKGMPIPVVITVYTDRSFTFETKTPPASFLLLKAAGLKSGSGRPNTEKVGTIKRSAVQEIAETKATDMTGADIEAMTRSIEGTARSMGLVVED.

The protein belongs to the universal ribosomal protein uL11 family. As to quaternary structure, part of the ribosomal stalk of the 50S ribosomal subunit. Interacts with L10 and the large rRNA to form the base of the stalk. L10 forms an elongated spine to which L12 dimers bind in a sequential fashion forming a multimeric L10(L12)X complex. In terms of processing, one or more lysine residues are methylated.

In terms of biological role, forms part of the ribosomal stalk which helps the ribosome interact with GTP-bound translation factors. This is Large ribosomal subunit protein uL11 from Shewanella sediminis (strain HAW-EB3).